We begin with the raw amino-acid sequence, 330 residues long: LIM domain-containing protein pin-2 (330 aa).

LIM zinc-binding domains follow at residues 21–73 (CERC…CEHD), 82–132 (CAKC…CFLC), 144–194 (CNKC…CPRC), 202–255 (CFDC…CRDD), and 264–315 (CFIC…CKKC).

In terms of tissue distribution, expressed in neurons and intestine.

The protein resides in the cytoplasm. The protein localises to the nucleus. The protein is LIM domain-containing protein pin-2 (pin-2) of Caenorhabditis elegans.